Reading from the N-terminus, the 352-residue chain is Maleylacetate reductase (352 aa).

The protein belongs to the iron-containing alcohol dehydrogenase family.

The catalysed reaction is 3-oxoadipate + NAD(+) = maleylacetate + NADH + H(+). The enzyme catalyses 3-oxoadipate + NADP(+) = maleylacetate + NADPH + H(+). It functions in the pathway aromatic compound metabolism; 3-chlorocatechol degradation. This Pseudomonas sp. (strain P51) protein is Maleylacetate reductase (tcbF).